The following is a 251-amino-acid chain: D-aminoacyl-tRNA deacylase (251 aa).

Belongs to the DtdA deacylase family. In terms of assembly, monomer. The cofactor is Zn(2+).

It catalyses the reaction a D-aminoacyl-tRNA + H2O = a tRNA + a D-alpha-amino acid + H(+). The enzyme catalyses glycyl-tRNA(Ala) + H2O = tRNA(Ala) + glycine + H(+). In terms of biological role, D-aminoacyl-tRNA deacylase with broad substrate specificity. By recycling D-aminoacyl-tRNA to D-amino acids and free tRNA molecules, this enzyme counteracts the toxicity associated with the formation of D-aminoacyl-tRNA entities in vivo. In Pyrobaculum calidifontis (strain DSM 21063 / JCM 11548 / VA1), this protein is D-aminoacyl-tRNA deacylase.